The following is a 151-amino-acid chain: Arginine repressor (151 aa).

Belongs to the ArgR family.

Its subcellular location is the cytoplasm. Its pathway is amino-acid biosynthesis; L-arginine biosynthesis [regulation]. Its function is as follows. Regulates arginine biosynthesis genes. The polypeptide is Arginine repressor (Lachnospira eligens (strain ATCC 27750 / DSM 3376 / VPI C15-48 / C15-B4) (Eubacterium eligens)).